The following is a 615-amino-acid chain: Chaperone protein DnaK (615 aa).

T195 bears the Phosphothreonine; by autocatalysis mark. Positions 592 to 615 (EKGAQAASGKGPDDVIDADYKPAD) are disordered.

It belongs to the heat shock protein 70 family.

Acts as a chaperone. The sequence is that of Chaperone protein DnaK from Thermus thermophilus (strain ATCC BAA-163 / DSM 7039 / HB27).